The primary structure comprises 86 residues: ATP synthase subunit c (86 aa).

A run of 2 helical transmembrane segments spans residues 8-28 (VLAASAIGAGLAMIAGIGAGI) and 66-86 (GIYALVIALLLLFANPLIGML).

Belongs to the ATPase C chain family. In terms of assembly, F-type ATPases have 2 components, F(1) - the catalytic core - and F(0) - the membrane proton channel. F(1) has five subunits: alpha(3), beta(3), gamma(1), delta(1), epsilon(1). F(0) has three main subunits: a(1), b(2) and c(10-14). The alpha and beta chains form an alternating ring which encloses part of the gamma chain. F(1) is attached to F(0) by a central stalk formed by the gamma and epsilon chains, while a peripheral stalk is formed by the delta and b chains.

It is found in the cell membrane. Its function is as follows. F(1)F(0) ATP synthase produces ATP from ADP in the presence of a proton or sodium gradient. F-type ATPases consist of two structural domains, F(1) containing the extramembraneous catalytic core and F(0) containing the membrane proton channel, linked together by a central stalk and a peripheral stalk. During catalysis, ATP synthesis in the catalytic domain of F(1) is coupled via a rotary mechanism of the central stalk subunits to proton translocation. In terms of biological role, key component of the F(0) channel; it plays a direct role in translocation across the membrane. A homomeric c-ring of between 10-14 subunits forms the central stalk rotor element with the F(1) delta and epsilon subunits. The protein is ATP synthase subunit c of Natranaerobius thermophilus (strain ATCC BAA-1301 / DSM 18059 / JW/NM-WN-LF).